The following is a 262-amino-acid chain: 14-3-3 protein homolog (262 aa).

Belongs to the 14-3-3 family.

This Trichoderma harzianum (Hypocrea lixii) protein is 14-3-3 protein homolog.